Reading from the N-terminus, the 84-residue chain is Subtilisin-chymotrypsin inhibitor WSCI (84 aa).

Positions 1–12 (MSSVVKKPLGGN) are cleaved as a signal peptide. Positions 1–28 (MSSVVKKPLGGNTDTGDHHNQKTEWPEL) are disordered. Basic and acidic residues predominate over residues 15-25 (TGDHHNQKTEW).

As to quaternary structure, monomer.

It is found in the secreted. Functionally, inhibits B.lichenoformis subtilisin, B.subtilis subtilisin, bovine pancreatic alpha-chymotrypsin and porcine alpha-chymotrypsin with Ki of 3.92 nM, 5.70 nM, 7.24 nM and 9.35 nM respectively. B.lichenoformis subtilisin is inhibited with a molar ratio of 1:0.87. Also inhibits chymotrypsin-like activities from the digestive tracts of the insect larvae T.molitor, P.interpunctella and H.armigera. Does not inhibit bovine pancreatic trypsin, porcine pancreatic elastase, or human leukocyte elastase. In Triticum aestivum (Wheat), this protein is Subtilisin-chymotrypsin inhibitor WSCI.